A 549-amino-acid polypeptide reads, in one-letter code: Cation/acetate symporter ActP (549 aa).

13 helical membrane-spanning segments follow: residues 33-53 (WQAIIMFLIFVVFTLGITYWA), 77-97 (LAIAGDYMSAASFLGISALVF), 103-123 (GLIYSLGFLVGWPIILFLIAE), 148-168 (ILSACGSLVVVALYLIAQMVG), 183-203 (IAVVLVGVLMMMYVLFGGMLA), 206-226 (WVQIIKAVLLLFGASFMAFMV), 262-282 (ISALSLGLGLMFGTAGLPHIL), 303-323 (GFMGYFYILTFIIGFGAIMLV), 355-375 (LFLGFISAVAFATILAVVAGL), 404-424 (VSKITVLVLGVIAIILGVLFE), 428-448 (IAFMVGLAFAIAASCNFPIIL), 464-484 (GGWLGLLTAVVLMILGPTIWV), and 493-513 (IFPYEYPALFSISVAFLGIWF).

The protein belongs to the sodium:solute symporter (SSF) (TC 2.A.21) family.

It localises to the cell inner membrane. Its function is as follows. Transports acetate. This is Cation/acetate symporter ActP from Salmonella gallinarum (strain 287/91 / NCTC 13346).